The sequence spans 255 residues: 3-deoxy-manno-octulosonate cytidylyltransferase (255 aa).

This sequence belongs to the KdsB family.

It is found in the cytoplasm. It carries out the reaction 3-deoxy-alpha-D-manno-oct-2-ulosonate + CTP = CMP-3-deoxy-beta-D-manno-octulosonate + diphosphate. It participates in nucleotide-sugar biosynthesis; CMP-3-deoxy-D-manno-octulosonate biosynthesis; CMP-3-deoxy-D-manno-octulosonate from 3-deoxy-D-manno-octulosonate and CTP: step 1/1. It functions in the pathway bacterial outer membrane biogenesis; lipopolysaccharide biosynthesis. Functionally, activates KDO (a required 8-carbon sugar) for incorporation into bacterial lipopolysaccharide in Gram-negative bacteria. The sequence is that of 3-deoxy-manno-octulosonate cytidylyltransferase from Hahella chejuensis (strain KCTC 2396).